Here is a 235-residue protein sequence, read N- to C-terminus: Phosphoribosylaminoimidazole-succinocarboxamide synthase (235 aa).

It belongs to the SAICAR synthetase family.

It catalyses the reaction 5-amino-1-(5-phospho-D-ribosyl)imidazole-4-carboxylate + L-aspartate + ATP = (2S)-2-[5-amino-1-(5-phospho-beta-D-ribosyl)imidazole-4-carboxamido]succinate + ADP + phosphate + 2 H(+). It functions in the pathway purine metabolism; IMP biosynthesis via de novo pathway; 5-amino-1-(5-phospho-D-ribosyl)imidazole-4-carboxamide from 5-amino-1-(5-phospho-D-ribosyl)imidazole-4-carboxylate: step 1/2. The sequence is that of Phosphoribosylaminoimidazole-succinocarboxamide synthase from Streptococcus thermophilus (strain CNRZ 1066).